Reading from the N-terminus, the 330-residue chain is Aspartate--ammonia ligase (330 aa).

The protein belongs to the class-II aminoacyl-tRNA synthetase family. AsnA subfamily.

The protein resides in the cytoplasm. It catalyses the reaction L-aspartate + NH4(+) + ATP = L-asparagine + AMP + diphosphate + H(+). It participates in amino-acid biosynthesis; L-asparagine biosynthesis; L-asparagine from L-aspartate (ammonia route): step 1/1. This is Aspartate--ammonia ligase from Treponema pallidum (strain Nichols).